The following is an 893-amino-acid chain: Translation initiation factor IF-2 (893 aa).

A disordered region spans residues 49–303 (LNREAGSGPD…KGSSLQQGFQ (255 aa)). Polar residues predominate over residues 68-82 (STLNIPGTGGKSKSV). Basic and acidic residues-rich tracts occupy residues 93–159 (VKRD…KDKV) and 166–216 (DMTK…EENK). Residues 254 to 269 (GRGRNAKAARPAKKGN) are compositionally biased toward basic residues. Over residues 270–283 (KHAESKADREEARA) the composition is skewed to basic and acidic residues. The tr-type G domain occupies 392–561 (PRAPVVTIMG…LLQAEVLELK (170 aa)). Residues 401-408 (GHVDHGKT) form a G1 region. 401–408 (GHVDHGKT) serves as a coordination point for GTP. Residues 426–430 (GITQH) are G2. Residues 447-450 (DTPG) form a G3 region. Residues 447-451 (DTPGH) and 501-504 (NKID) contribute to the GTP site. Positions 501–504 (NKID) are G4. Residues 537–539 (SAK) form a G5 region.

It belongs to the TRAFAC class translation factor GTPase superfamily. Classic translation factor GTPase family. IF-2 subfamily.

The protein resides in the cytoplasm. Its function is as follows. One of the essential components for the initiation of protein synthesis. Protects formylmethionyl-tRNA from spontaneous hydrolysis and promotes its binding to the 30S ribosomal subunits. Also involved in the hydrolysis of GTP during the formation of the 70S ribosomal complex. This Salmonella arizonae (strain ATCC BAA-731 / CDC346-86 / RSK2980) protein is Translation initiation factor IF-2.